The primary structure comprises 854 residues: DNA gyrase subunit A (854 aa).

A Topo IIA-type catalytic domain is found at 42 to 510 (LPEVRDGLKP…ADGQVSDEDL (469 aa)). The active-site O-(5'-phospho-DNA)-tyrosine intermediate is the tyrosine 129. Residues 537-543 (QKRGGKG) carry the GyrA-box motif.

The protein belongs to the type II topoisomerase GyrA/ParC subunit family. As to quaternary structure, heterotetramer, composed of two GyrA and two GyrB chains. In the heterotetramer, GyrA contains the active site tyrosine that forms a transient covalent intermediate with DNA, while GyrB binds cofactors and catalyzes ATP hydrolysis.

The protein resides in the cytoplasm. It catalyses the reaction ATP-dependent breakage, passage and rejoining of double-stranded DNA.. DNA supercoiling is inhibited by the coumarin antibiotic novobiocin. Also inhibited by the fluoroquinolones ciprofloxacin and moxifloxacin. Functionally, a type II topoisomerase that negatively supercoils closed circular double-stranded (ds) DNA in an ATP-dependent manner to modulate DNA topology and maintain chromosomes in an underwound state; also catalyzes the interconversion of other topological isomers of double-stranded DNA rings, including catenanes. At comparable concentrations has a stronger decatenation activity than E.coli, which is inhibited by ciprofloxacin and novobiocin. Cleaves dsDNA at the sequence 5'-AT/GGCC-3', leaving a 4 base overhang. Relaxes negatively supercoiled DNA in an ATP-independent manner. Its function is as follows. Negative supercoiling favors strand separation, and DNA replication, transcription, recombination and repair, all of which involve strand separation. Type II topoisomerases break and join 2 DNA strands simultaneously in an ATP-dependent manner. This is DNA gyrase subunit A from Mycolicibacterium smegmatis (Mycobacterium smegmatis).